Here is a 364-residue protein sequence, read N- to C-terminus: tRNA-specific 2-thiouridylase MnmA (364 aa).

Residues 13–20 and methionine 39 each bind ATP; that span reads GMSGGVDS. The segment at 99-101 is interaction with target base in tRNA; the sequence is NPD. The Nucleophile role is filled by cysteine 104. Cysteine 104 and cysteine 200 are joined by a disulfide. Glycine 128 contacts ATP. Residues 150 to 152 form an interaction with tRNA region; that stretch reads KDQ. Cysteine 200 functions as the Cysteine persulfide intermediate in the catalytic mechanism. Positions 310–311 are interaction with tRNA; the sequence is RY.

Belongs to the MnmA/TRMU family.

The protein localises to the cytoplasm. The enzyme catalyses S-sulfanyl-L-cysteinyl-[protein] + uridine(34) in tRNA + AH2 + ATP = 2-thiouridine(34) in tRNA + L-cysteinyl-[protein] + A + AMP + diphosphate + H(+). Its function is as follows. Catalyzes the 2-thiolation of uridine at the wobble position (U34) of tRNA, leading to the formation of s(2)U34. The protein is tRNA-specific 2-thiouridylase MnmA of Alkaliphilus oremlandii (strain OhILAs) (Clostridium oremlandii (strain OhILAs)).